The primary structure comprises 343 residues: Dihydroorotase (343 aa).

The Zn(2+) site is built by histidine 14 and histidine 16. Substrate contacts are provided by residues 16–18 (HLR) and asparagine 42. The Zn(2+) site is built by lysine 100, histidine 137, and histidine 175. Lysine 100 carries the N6-carboxylysine modification. Histidine 137 lines the substrate pocket. Leucine 220 provides a ligand contact to substrate. Zn(2+) is bound at residue aspartate 248. Aspartate 248 is an active-site residue. 2 residues coordinate substrate: histidine 252 and alanine 264.

This sequence belongs to the metallo-dependent hydrolases superfamily. DHOase family. Class II DHOase subfamily. As to quaternary structure, homodimer. It depends on Zn(2+) as a cofactor.

It carries out the reaction (S)-dihydroorotate + H2O = N-carbamoyl-L-aspartate + H(+). Its pathway is pyrimidine metabolism; UMP biosynthesis via de novo pathway; (S)-dihydroorotate from bicarbonate: step 3/3. In terms of biological role, catalyzes the reversible cyclization of carbamoyl aspartate to dihydroorotate. This Synechococcus sp. (strain CC9902) protein is Dihydroorotase.